A 427-amino-acid chain; its full sequence is 3-phosphoshikimate 1-carboxyvinyltransferase (427 aa).

Positions 23, 24, and 28 each coordinate 3-phosphoshikimate. K23 provides a ligand contact to phosphoenolpyruvate. Residues G97 and R125 each contribute to the phosphoenolpyruvate site. 3-phosphoshikimate contacts are provided by S170, S171, Q172, S198, D314, N337, and K341. Q172 is a phosphoenolpyruvate binding site. Catalysis depends on D314, which acts as the Proton acceptor. Residues R345, R387, and K412 each contribute to the phosphoenolpyruvate site.

Belongs to the EPSP synthase family. In terms of assembly, monomer.

It localises to the cytoplasm. The enzyme catalyses 3-phosphoshikimate + phosphoenolpyruvate = 5-O-(1-carboxyvinyl)-3-phosphoshikimate + phosphate. It functions in the pathway metabolic intermediate biosynthesis; chorismate biosynthesis; chorismate from D-erythrose 4-phosphate and phosphoenolpyruvate: step 6/7. In terms of biological role, catalyzes the transfer of the enolpyruvyl moiety of phosphoenolpyruvate (PEP) to the 5-hydroxyl of shikimate-3-phosphate (S3P) to produce enolpyruvyl shikimate-3-phosphate and inorganic phosphate. In Buchnera aphidicola subsp. Acyrthosiphon pisum (strain Tuc7), this protein is 3-phosphoshikimate 1-carboxyvinyltransferase.